A 431-amino-acid chain; its full sequence is Histidinol dehydrogenase (431 aa).

3 residues coordinate NAD(+): Tyr127, Gln189, and Asn212. Residues Ser237, Gln259, and His262 each contribute to the substrate site. Zn(2+) is bound by residues Gln259 and His262. Catalysis depends on proton acceptor residues Glu326 and His327. The substrate site is built by His327, Asp360, Glu414, and His419. Asp360 contributes to the Zn(2+) binding site. His419 lines the Zn(2+) pocket.

It belongs to the histidinol dehydrogenase family. Zn(2+) is required as a cofactor.

It catalyses the reaction L-histidinol + 2 NAD(+) + H2O = L-histidine + 2 NADH + 3 H(+). Its pathway is amino-acid biosynthesis; L-histidine biosynthesis; L-histidine from 5-phospho-alpha-D-ribose 1-diphosphate: step 9/9. Its function is as follows. Catalyzes the sequential NAD-dependent oxidations of L-histidinol to L-histidinaldehyde and then to L-histidine. This is Histidinol dehydrogenase from Xylella fastidiosa (strain 9a5c).